The following is a 759-amino-acid chain: Protein zyg-11 homolog A (759 aa).

LRR repeat units lie at residues 204-227, 235-260, and 490-513; these read LPRLESLDISNTLVTDISALLTCK, MHYLKCLAMTKSQILAVIRELKCLLH, and VTSILALQLSPEQTAQLEELFMAV.

This sequence belongs to the zyg-11 family.

In terms of biological role, probably acts as a target recruitment subunit in an E3 ubiquitin ligase complex ZYGA-CUL2-elongin BC. The sequence is that of Protein zyg-11 homolog A (ZYG11A) from Homo sapiens (Human).